Here is a 300-residue protein sequence, read N- to C-terminus: tRNA dimethylallyltransferase 2 (300 aa).

Residue 13–20 (GPTGVGKT) coordinates ATP. 15–20 (TGVGKT) is a binding site for substrate. Positions 38–41 (DSRQ) are interaction with substrate tRNA.

This sequence belongs to the IPP transferase family. Monomer. Mg(2+) serves as cofactor.

The enzyme catalyses adenosine(37) in tRNA + dimethylallyl diphosphate = N(6)-dimethylallyladenosine(37) in tRNA + diphosphate. Functionally, catalyzes the transfer of a dimethylallyl group onto the adenine at position 37 in tRNAs that read codons beginning with uridine, leading to the formation of N6-(dimethylallyl)adenosine (i(6)A). In Porphyromonas gingivalis (strain ATCC 33277 / DSM 20709 / CIP 103683 / JCM 12257 / NCTC 11834 / 2561), this protein is tRNA dimethylallyltransferase 2.